The sequence spans 158 residues: NAD(P)H-quinone oxidoreductase subunit N (158 aa).

Belongs to the complex I NdhN subunit family. In terms of assembly, NDH-1 can be composed of about 15 different subunits; different subcomplexes with different compositions have been identified which probably have different functions.

The protein localises to the cellular thylakoid membrane. It catalyses the reaction a plastoquinone + NADH + (n+1) H(+)(in) = a plastoquinol + NAD(+) + n H(+)(out). The catalysed reaction is a plastoquinone + NADPH + (n+1) H(+)(in) = a plastoquinol + NADP(+) + n H(+)(out). In terms of biological role, NDH-1 shuttles electrons from an unknown electron donor, via FMN and iron-sulfur (Fe-S) centers, to quinones in the respiratory and/or the photosynthetic chain. The immediate electron acceptor for the enzyme in this species is believed to be plastoquinone. Couples the redox reaction to proton translocation, and thus conserves the redox energy in a proton gradient. Cyanobacterial NDH-1 also plays a role in inorganic carbon-concentration. This is NAD(P)H-quinone oxidoreductase subunit N from Crocosphaera subtropica (strain ATCC 51142 / BH68) (Cyanothece sp. (strain ATCC 51142)).